The chain runs to 343 residues: RNA 3'-terminal phosphate cyclase (343 aa).

ATP contacts are provided by residues glutamine 102 and 284–288 (FLGDQ). The active-site Tele-AMP-histidine intermediate is histidine 308.

Belongs to the RNA 3'-terminal cyclase family. Type 1 subfamily.

The protein localises to the cytoplasm. It catalyses the reaction a 3'-end 3'-phospho-ribonucleotide-RNA + ATP = a 3'-end 2',3'-cyclophospho-ribonucleotide-RNA + AMP + diphosphate. In terms of biological role, catalyzes the conversion of 3'-phosphate to a 2',3'-cyclic phosphodiester at the end of RNA. The mechanism of action of the enzyme occurs in 3 steps: (A) adenylation of the enzyme by ATP; (B) transfer of adenylate to an RNA-N3'P to produce RNA-N3'PP5'A; (C) and attack of the adjacent 2'-hydroxyl on the 3'-phosphorus in the diester linkage to produce the cyclic end product. The biological role of this enzyme is unknown but it is likely to function in some aspects of cellular RNA processing. The protein is RNA 3'-terminal phosphate cyclase (rtcA) of Thermococcus kodakarensis (strain ATCC BAA-918 / JCM 12380 / KOD1) (Pyrococcus kodakaraensis (strain KOD1)).